A 320-amino-acid chain; its full sequence is MQRTVLEGVGSYLPERIVTNHELATRIDTSDAWIRERTGIGQRHIAAAHETATFMGAEAARRALAAAGASADSVDAVIVATSTPDQGFPATAVSIQAAIGMTRGFAFDLSAACSGFVYGVSVADAMIRAGQCRSALVIGTEVYSRILNWEDRGTCVLFGDGAGAVLLRAGTGEDDRGVISTHIHSDGRYGDILFIDGATGQDDRPQHLVMNGREVFRHAVSKLAGAVDEALAANDLTQADIDWLVPHQANRRIIDAMGKRLGLAPEQVVVTVDRHANTSAASIPLALDEAVRDGRIRRGHLVLIEALGGGLTWGSALIRF.

Residues cysteine 113 and histidine 247 contribute to the active site. The interval 248–252 (QANRR) is ACP-binding. Asparagine 277 is an active-site residue.

It belongs to the thiolase-like superfamily. FabH family. Homodimer.

Its subcellular location is the cytoplasm. The enzyme catalyses malonyl-[ACP] + acetyl-CoA + H(+) = 3-oxobutanoyl-[ACP] + CO2 + CoA. It functions in the pathway lipid metabolism; fatty acid biosynthesis. Functionally, catalyzes the condensation reaction of fatty acid synthesis by the addition to an acyl acceptor of two carbons from malonyl-ACP. Catalyzes the first condensation reaction which initiates fatty acid synthesis and may therefore play a role in governing the total rate of fatty acid production. Possesses both acetoacetyl-ACP synthase and acetyl transacylase activities. Its substrate specificity determines the biosynthesis of branched-chain and/or straight-chain of fatty acids. The chain is Beta-ketoacyl-[acyl-carrier-protein] synthase III from Acidiphilium cryptum (strain JF-5).